Here is a 457-residue protein sequence, read N- to C-terminus: Multidrug resistance protein MdtK (457 aa).

The Cytoplasmic segment spans residues Met1–Leu10. Residues Leu11–Val31 traverse the membrane as a helical segment. Topologically, residues Asp32–Ser52 are periplasmic. A helical transmembrane segment spans residues Ile53–Ala73. The Cytoplasmic portion of the chain corresponds to Gln74–Phe92. Residues Trp93–Ile113 traverse the membrane as a helical segment. Residues Arg114–Lys126 are Periplasmic-facing. A helical membrane pass occupies residues Ala127–Ala147. The Cytoplasmic segment spans residues Arg148–Pro159. The chain crosses the membrane as a helical span at residues Gly160 to Tyr180. At Gly181–Val191 the chain is on the periplasmic side. The chain crosses the membrane as a helical span at residues Gly192–Ile212. At Lys213–Gly242 the chain is on the cytoplasmic side. A helical membrane pass occupies residues Leu243 to Val263. Residues Ser264–Gln275 are Periplasmic-facing. A helical membrane pass occupies residues Ile276–Thr296. Over Ile297–Thr313 the chain is Cytoplasmic. A helical membrane pass occupies residues Ala314 to Val334. Residues Ser335–Glu349 are Periplasmic-facing. A helical membrane pass occupies residues Val350–Ile370. Residues Gln371 to Ser386 lie on the Cytoplasmic side of the membrane. Residues Ile387–Ala407 form a helical membrane-spanning segment. The Periplasmic portion of the chain corresponds to Leu408–Gly417. Residues Pro418–Leu438 traverse the membrane as a helical segment. Topologically, residues Arg439–Arg457 are cytoplasmic.

The protein belongs to the multi antimicrobial extrusion (MATE) (TC 2.A.66.1) family. MdtK subfamily.

It localises to the cell inner membrane. Functionally, multidrug efflux pump that functions probably as a Na(+)/drug antiporter. The sequence is that of Multidrug resistance protein MdtK from Shigella dysenteriae serotype 1 (strain Sd197).